The chain runs to 284 residues: 2,3,4,5-tetrahydropyridine-2,6-dicarboxylate N-succinyltransferase (284 aa).

Substrate-binding residues include R111 and D148.

The protein belongs to the transferase hexapeptide repeat family. In terms of assembly, homotrimer.

It is found in the cytoplasm. The catalysed reaction is (S)-2,3,4,5-tetrahydrodipicolinate + succinyl-CoA + H2O = (S)-2-succinylamino-6-oxoheptanedioate + CoA. The protein operates within amino-acid biosynthesis; L-lysine biosynthesis via DAP pathway; LL-2,6-diaminopimelate from (S)-tetrahydrodipicolinate (succinylase route): step 1/3. This Brucella melitensis biotype 2 (strain ATCC 23457) protein is 2,3,4,5-tetrahydropyridine-2,6-dicarboxylate N-succinyltransferase.